Consider the following 252-residue polypeptide: Uracil-DNA glycosylase (252 aa).

Asp-78 (proton acceptor) is an active-site residue.

Belongs to the uracil-DNA glycosylase (UDG) superfamily. UNG family.

Its subcellular location is the cytoplasm. It catalyses the reaction Hydrolyzes single-stranded DNA or mismatched double-stranded DNA and polynucleotides, releasing free uracil.. Its function is as follows. Excises uracil residues from the DNA which can arise as a result of misincorporation of dUMP residues by DNA polymerase or due to deamination of cytosine. This chain is Uracil-DNA glycosylase, found in Bordetella avium (strain 197N).